A 568-amino-acid chain; its full sequence is Urease subunit alpha (568 aa).

Residues 133–568 enclose the Urease domain; it reads GGVDTHIHFI…LPLAQKYFLF (436 aa). The Ni(2+) site is built by His138, His140, and Lys221. Residue Lys221 is modified to N6-carboxylysine. His223 is a binding site for substrate. 2 residues coordinate Ni(2+): His250 and His276. His324 functions as the Proton donor in the catalytic mechanism. Asp364 serves as a coordination point for Ni(2+).

This sequence belongs to the metallo-dependent hydrolases superfamily. Urease alpha subunit family. As to quaternary structure, heterohexamer of 3 UreC (alpha) and 3 UreAB (gamma/beta) subunits. Requires Ni cation as cofactor. In terms of processing, carboxylation allows a single lysine to coordinate two nickel ions.

It is found in the cytoplasm. It carries out the reaction urea + 2 H2O + H(+) = hydrogencarbonate + 2 NH4(+). It functions in the pathway nitrogen metabolism; urea degradation; CO(2) and NH(3) from urea (urease route): step 1/1. The chain is Urease subunit alpha from Deinococcus radiodurans (strain ATCC 13939 / DSM 20539 / JCM 16871 / CCUG 27074 / LMG 4051 / NBRC 15346 / NCIMB 9279 / VKM B-1422 / R1).